The following is a 205-amino-acid chain: High frequency lysogenization protein HflD homolog (205 aa).

Belongs to the HflD family.

The protein resides in the cytoplasm. It is found in the cell inner membrane. This Shewanella sp. (strain ANA-3) protein is High frequency lysogenization protein HflD homolog.